Consider the following 407-residue polypeptide: Serine/threonine transporter SstT (407 aa).

The next 9 membrane-spanning stretches (helical) occupy residues 14-34, 48-68, 82-102, 141-161, 192-212, 216-236, 290-310, 316-336, and 363-383; these read GSLV…ATVS, FVGA…AASI, IVIL…LMSF, AVLT…GLAL, IGIF…AIAG, LLLV…PAIV, IPLG…ILTL, MGIQ…GVSA, and VAMQ…SAET.

The protein belongs to the dicarboxylate/amino acid:cation symporter (DAACS) (TC 2.A.23) family.

It is found in the cell inner membrane. The catalysed reaction is L-serine(in) + Na(+)(in) = L-serine(out) + Na(+)(out). It catalyses the reaction L-threonine(in) + Na(+)(in) = L-threonine(out) + Na(+)(out). Involved in the import of serine and threonine into the cell, with the concomitant import of sodium (symport system). The protein is Serine/threonine transporter SstT of Shewanella halifaxensis (strain HAW-EB4).